The following is a 147-amino-acid chain: Small ribosomal subunit protein uS13 (147 aa).

Positions 115–147 (SYKGRRHEAGLPVRGQRTKSTFRNSSSVGVKRS) are disordered. Over residues 132–147 (TKSTFRNSSSVGVKRS) the composition is skewed to polar residues.

This sequence belongs to the universal ribosomal protein uS13 family. Part of the 30S ribosomal subunit. Forms a loose heterodimer with protein S19. Forms two bridges to the 50S subunit in the 70S ribosome.

Functionally, located at the top of the head of the 30S subunit, it contacts several helices of the 16S rRNA. In the 70S ribosome it contacts the 23S rRNA (bridge B1a) and protein L5 of the 50S subunit (bridge B1b), connecting the 2 subunits; these bridges are implicated in subunit movement. The protein is Small ribosomal subunit protein uS13 of Methanobrevibacter smithii (strain ATCC 35061 / DSM 861 / OCM 144 / PS).